The sequence spans 184 residues: Photosystem I assembly protein Ycf4 (184 aa).

2 helical membrane passes run 19 to 39 (ISNL…VLVG) and 57 to 77 (IIFF…LFIS).

Belongs to the Ycf4 family.

The protein localises to the plastid thylakoid membrane. In terms of biological role, seems to be required for the assembly of the photosystem I complex. This chain is Photosystem I assembly protein Ycf4, found in Cuscuta reflexa (Southern Asian dodder).